Reading from the N-terminus, the 128-residue chain is Leucine-rich single-pass membrane protein 1 (128 aa).

The residue at position 24 (Ser24) is a Phosphoserine. Residues 66–86 form a helical membrane-spanning segment; that stretch reads GLLLVLTVSLALVFFAIFLII. A coiled-coil region spans residues 90–111; sequence NQMEDVSRRLTAEGKDIDDLKK.

Its subcellular location is the membrane. This chain is Leucine-rich single-pass membrane protein 1 (Lsmem1), found in Mus musculus (Mouse).